An 82-amino-acid chain; its full sequence is Delta-actitoxin-Aeq2b 1 (82 aa).

A signal peptide spans Met1 to Ala19. The propeptide occupies Asp20–Ala26. Disulfide bonds link Cys32–Cys79, Cys34–Cys69, and Cys62–Cys80.

The protein belongs to the sea anemone sodium channel inhibitory toxin family. Type I subfamily.

The protein localises to the secreted. It localises to the nematocyst. Binds specifically to voltage-gated sodium channels (Nav), thereby delaying their inactivation during signal transduction. Causes death to crabs. The sequence is that of Delta-actitoxin-Aeq2b 1 from Actinia equina (Beadlet anemone).